The following is a 182-amino-acid chain: Ribosome maturation factor RimM (182 aa).

The region spanning 103-182 (VGDYYWKDLI…TIEVDWDPGF (80 aa)) is the PRC barrel domain.

It belongs to the RimM family. Binds ribosomal protein uS19.

Its subcellular location is the cytoplasm. Functionally, an accessory protein needed during the final step in the assembly of 30S ribosomal subunit, possibly for assembly of the head region. Essential for efficient processing of 16S rRNA. May be needed both before and after RbfA during the maturation of 16S rRNA. It has affinity for free ribosomal 30S subunits but not for 70S ribosomes. This is Ribosome maturation factor RimM from Pectobacterium atrosepticum (strain SCRI 1043 / ATCC BAA-672) (Erwinia carotovora subsp. atroseptica).